Here is a 309-residue protein sequence, read N- to C-terminus: Tagatose-6-phosphate kinase (309 aa).

Belongs to the carbohydrate kinase PfkB family. LacC subfamily.

The enzyme catalyses D-tagatofuranose 6-phosphate + ATP = D-tagatofuranose 1,6-bisphosphate + ADP + H(+). Its pathway is carbohydrate metabolism; D-tagatose 6-phosphate degradation; D-glyceraldehyde 3-phosphate and glycerone phosphate from D-tagatose 6-phosphate: step 1/2. In Streptococcus pneumoniae (strain P1031), this protein is Tagatose-6-phosphate kinase.